We begin with the raw amino-acid sequence, 150 residues long: MRVIVQRVLSASVASGDESAVHIGPGLLVLSGIAPADDQAALGWMCRKVVNLRIFDDEAGRMNRSVKDIGGEILLVSQFTLYSDVSSGNRPGFSGAAGYDIAKPLFEKFHQMVQQEMERPVATGWYGEHMQVALVNDGPVTLIIDSPTRS.

The Gly-cisPro motif, important for rejection of L-amino acids signature appears at 138 to 139 (GP).

Belongs to the DTD family. Homodimer.

It localises to the cytoplasm. The enzyme catalyses glycyl-tRNA(Ala) + H2O = tRNA(Ala) + glycine + H(+). The catalysed reaction is a D-aminoacyl-tRNA + H2O = a tRNA + a D-alpha-amino acid + H(+). An aminoacyl-tRNA editing enzyme that deacylates mischarged D-aminoacyl-tRNAs. Also deacylates mischarged glycyl-tRNA(Ala), protecting cells against glycine mischarging by AlaRS. Acts via tRNA-based rather than protein-based catalysis; rejects L-amino acids rather than detecting D-amino acids in the active site. By recycling D-aminoacyl-tRNA to D-amino acids and free tRNA molecules, this enzyme counteracts the toxicity associated with the formation of D-aminoacyl-tRNA entities in vivo and helps enforce protein L-homochirality. This chain is D-aminoacyl-tRNA deacylase, found in Chlorobium phaeobacteroides (strain DSM 266 / SMG 266 / 2430).